Consider the following 643-residue polypeptide: Threonine--tRNA ligase (643 aa).

The region spanning 1–61 is the TGS domain; that stretch reads MPIITLPDGS…SEDATLEIIT (61 aa). The catalytic stretch occupies residues 243 to 534; that stretch reads DHRKIGKALD…ITEEYAGFFP (292 aa). Zn(2+)-binding residues include C334, H385, and H511.

This sequence belongs to the class-II aminoacyl-tRNA synthetase family. In terms of assembly, homodimer. Zn(2+) is required as a cofactor.

It is found in the cytoplasm. It carries out the reaction tRNA(Thr) + L-threonine + ATP = L-threonyl-tRNA(Thr) + AMP + diphosphate + H(+). Catalyzes the attachment of threonine to tRNA(Thr) in a two-step reaction: L-threonine is first activated by ATP to form Thr-AMP and then transferred to the acceptor end of tRNA(Thr). Also edits incorrectly charged L-seryl-tRNA(Thr). This is Threonine--tRNA ligase from Glaesserella parasuis serovar 5 (strain SH0165) (Haemophilus parasuis).